Here is a 264-residue protein sequence, read N- to C-terminus: uncharacterized protein (264 aa).

The N-terminal stretch at 1-16 is a signal peptide; the sequence is MKGKSALTLLLAGIFS. The N-palmitoyl cysteine moiety is linked to residue Cys-17. Residue Cys-17 is the site of S-diacylglycerol cysteine attachment.

The protein resides in the cell inner membrane. This is an uncharacterized protein from Escherichia coli (strain K12).